Consider the following 315-residue polypeptide: MRITARAWGKINLHLGVGPAREDGYHELVTVFQTIDLAETITLTTLEDELVEEGSVVRQLTVTGPRGVPTTPDNLAWRAVDALVGRRREHDRTPLPAVELHIDKGIPVAGGMAGGSADAAAALRAVDAWIGPFGEETLLEVAAELGSDVPFCLLGGTKLGTGRGEQLVDMLSRGTYHWALVVSPKGLSTPEVFAKFDEMSLPSSMDVTPMSQALLDGSAGALAEVLENDLAPAALSLRPDLRKTQLAGLRAGALATMVSGSGPTIALLCDDAQSARDVADALMDEGVGLSVHPATSPVPGPAKNRGAHIVSIESE.

Residue lysine 10 is part of the active site. Residue 107–117 coordinates ATP; that stretch reads PVAGGMAGGSA. Aspartate 148 is a catalytic residue. The tract at residues 292-315 is disordered; sequence HPATSPVPGPAKNRGAHIVSIESE.

It belongs to the GHMP kinase family. IspE subfamily.

The enzyme catalyses 4-CDP-2-C-methyl-D-erythritol + ATP = 4-CDP-2-C-methyl-D-erythritol 2-phosphate + ADP + H(+). It participates in isoprenoid biosynthesis; isopentenyl diphosphate biosynthesis via DXP pathway; isopentenyl diphosphate from 1-deoxy-D-xylulose 5-phosphate: step 3/6. Functionally, catalyzes the phosphorylation of the position 2 hydroxy group of 4-diphosphocytidyl-2C-methyl-D-erythritol. The chain is 4-diphosphocytidyl-2-C-methyl-D-erythritol kinase from Corynebacterium efficiens (strain DSM 44549 / YS-314 / AJ 12310 / JCM 11189 / NBRC 100395).